The chain runs to 329 residues: Lipoyl synthase (329 aa).

Residues Cys-72, Cys-77, Cys-83, Cys-98, Cys-102, Cys-105, and Ser-313 each coordinate [4Fe-4S] cluster. The region spanning 83 to 303 (CWSHGTATIM…QIGLKKGFFE (221 aa)) is the Radical SAM core domain.

The protein belongs to the radical SAM superfamily. Lipoyl synthase family. [4Fe-4S] cluster is required as a cofactor.

The protein resides in the cytoplasm. The catalysed reaction is [[Fe-S] cluster scaffold protein carrying a second [4Fe-4S](2+) cluster] + N(6)-octanoyl-L-lysyl-[protein] + 2 oxidized [2Fe-2S]-[ferredoxin] + 2 S-adenosyl-L-methionine + 4 H(+) = [[Fe-S] cluster scaffold protein] + N(6)-[(R)-dihydrolipoyl]-L-lysyl-[protein] + 4 Fe(3+) + 2 hydrogen sulfide + 2 5'-deoxyadenosine + 2 L-methionine + 2 reduced [2Fe-2S]-[ferredoxin]. It functions in the pathway protein modification; protein lipoylation via endogenous pathway; protein N(6)-(lipoyl)lysine from octanoyl-[acyl-carrier-protein]: step 2/2. Catalyzes the radical-mediated insertion of two sulfur atoms into the C-6 and C-8 positions of the octanoyl moiety bound to the lipoyl domains of lipoate-dependent enzymes, thereby converting the octanoylated domains into lipoylated derivatives. This chain is Lipoyl synthase, found in Legionella pneumophila (strain Paris).